We begin with the raw amino-acid sequence, 138 residues long: MGDKTRVQVSKLKPGRYILIDDEPCRIANITVSSPGKHGSAKARIEAVGIFDGKVRSIVKPTSAEVDVPIIDKKTGQIIAITPDTVQLMDMETYDLFDVPIATGVNEEIKDKLKEGINVEYWETLGRIKIMKLKGESS.

Residue lysine 37 is modified to Hypusine.

This sequence belongs to the eIF-5A family.

The protein resides in the cytoplasm. Functionally, functions by promoting the formation of the first peptide bond. The sequence is that of Translation initiation factor 5A (eIF5A) from Thermococcus sibiricus (strain DSM 12597 / MM 739).